The following is a 405-amino-acid chain: Amino sugar nitrososynthase DnmZ (405 aa).

The dTDP site is built by glutamate 117 and arginine 332.

It belongs to the acyl-CoA dehydrogenase family. As to quaternary structure, homotetramer. It depends on FAD as a cofactor.

The protein operates within antibiotic biosynthesis. In terms of biological role, nitrososynthase involved in the biosynthesis of baumycin. Catalyzes the double-oxidation of TDP-L-epi-vancosamine to TDP-L-epi-vancosonitrose. The rapid turnover of TDP-L-epi-vancosamine suggests that this compound, or a closely related analog, is the natural substrate for DnmZ. Can also catalyze the double-oxidation of TDP-L-evernosamine to TDP-L-evernitrosose. The protein is Amino sugar nitrososynthase DnmZ of Streptomyces peucetius.